A 675-amino-acid chain; its full sequence is UvrABC system protein B (675 aa).

In terms of domain architecture, Helicase ATP-binding spans 35 to 192; that stretch reads QGMRDGLMYQ…ARLVAMQYTR (158 aa). ATP is bound at residue 48–55; it reads GVTGSGKT. A Beta-hairpin motif is present at residues 101–124; sequence YYDYYQPEAYVPTRDLFIEKDSSI. Positions 439-605 constitute a Helicase C-terminal domain; the sequence is QVDDLLGEIK…GVNKAVRELI (167 aa). The UVR domain occupies 633 to 668; the sequence is AREIRRLEKLMTDHARNLEFEQAAAARDALNALKQR.

The protein belongs to the UvrB family. In terms of assembly, forms a heterotetramer with UvrA during the search for lesions. Interacts with UvrC in an incision complex.

It localises to the cytoplasm. Functionally, the UvrABC repair system catalyzes the recognition and processing of DNA lesions. A damage recognition complex composed of 2 UvrA and 2 UvrB subunits scans DNA for abnormalities. Upon binding of the UvrA(2)B(2) complex to a putative damaged site, the DNA wraps around one UvrB monomer. DNA wrap is dependent on ATP binding by UvrB and probably causes local melting of the DNA helix, facilitating insertion of UvrB beta-hairpin between the DNA strands. Then UvrB probes one DNA strand for the presence of a lesion. If a lesion is found the UvrA subunits dissociate and the UvrB-DNA preincision complex is formed. This complex is subsequently bound by UvrC and the second UvrB is released. If no lesion is found, the DNA wraps around the other UvrB subunit that will check the other stand for damage. The chain is UvrABC system protein B from Bordetella petrii (strain ATCC BAA-461 / DSM 12804 / CCUG 43448).